We begin with the raw amino-acid sequence, 180 residues long: Adenine phosphoribosyltransferase (180 aa).

Belongs to the purine/pyrimidine phosphoribosyltransferase family. Homodimer.

It localises to the cytoplasm. It catalyses the reaction AMP + diphosphate = 5-phospho-alpha-D-ribose 1-diphosphate + adenine. Its pathway is purine metabolism; AMP biosynthesis via salvage pathway; AMP from adenine: step 1/1. Functionally, catalyzes a salvage reaction resulting in the formation of AMP, that is energically less costly than de novo synthesis. The sequence is that of Adenine phosphoribosyltransferase from Mycoplasma genitalium (strain ATCC 33530 / DSM 19775 / NCTC 10195 / G37) (Mycoplasmoides genitalium).